The sequence spans 42 residues: Delta-hexatoxin-Iw1a (42 aa).

Disulfide bonds link cysteine 1–cysteine 15, cysteine 8–cysteine 20, cysteine 14–cysteine 31, and cysteine 16–cysteine 42.

It belongs to the neurotoxin 06 (delta-actx) family. In terms of tissue distribution, expressed by the venom gland.

The protein resides in the secreted. Functionally, inhibits tetrodotoxin-sensitive sodium channels by binding to site 3. It slows the inactivation, causes a prolongation of action potential duration resulting in repetitive firing in autonomic and motor nerve fibers. Does not depolarize the resting potential. Does not affect tetrodotoxin-resistant sodium channels. This lethal neurotoxin is active on both insect and mammalian voltage-gated sodium channels (Nav). The sequence is that of Delta-hexatoxin-Iw1a from Illawarra wisharti (Illawarra funnel-web spider).